A 240-amino-acid polypeptide reads, in one-letter code: Ubiquinone biosynthesis O-methyltransferase (240 aa).

S-adenosyl-L-methionine contacts are provided by R44, G64, D85, and M129.

Belongs to the methyltransferase superfamily. UbiG/COQ3 family.

The catalysed reaction is a 3-demethylubiquinol + S-adenosyl-L-methionine = a ubiquinol + S-adenosyl-L-homocysteine + H(+). It catalyses the reaction a 3-(all-trans-polyprenyl)benzene-1,2-diol + S-adenosyl-L-methionine = a 2-methoxy-6-(all-trans-polyprenyl)phenol + S-adenosyl-L-homocysteine + H(+). The protein operates within cofactor biosynthesis; ubiquinone biosynthesis. Its function is as follows. O-methyltransferase that catalyzes the 2 O-methylation steps in the ubiquinone biosynthetic pathway. In Escherichia coli O157:H7, this protein is Ubiquinone biosynthesis O-methyltransferase.